A 135-amino-acid chain; its full sequence is Probable disulfide formation protein (135 aa).

Residues 7–26 (SYCLYFAWLVSCIGTLMSVY) traverse the membrane as a helical segment. Residues Cys-36 and Cys-39 are joined by a disulfide bond. The next 2 helical transmembrane spans lie at 41-60 (YQRICLFPLVVILGISAYLD) and 67-84 (YALPLALIGFCIAIYQVC). A disulfide bridge connects residues Cys-96 and Cys-101. A helical membrane pass occupies residues 109-131 (GFITMPMASALAFFAIANLLIFA).

Belongs to the DsbB family. BdbC subfamily.

Its subcellular location is the cell inner membrane. Functionally, required for disulfide bond formation in some proteins. This is Probable disulfide formation protein from Chlamydia muridarum (strain MoPn / Nigg).